A 150-amino-acid chain; its full sequence is S-protein homolog 3 (150 aa).

Positions 1–23 (MKNILKTQVHVVVIYLLIKIAFS) are cleaved as a signal peptide. N-linked (GlcNAc...) asparagine glycans are attached at residues N32 and N70.

It belongs to the plant self-incompatibility (S1) protein family.

It is found in the secreted. In Arabidopsis thaliana (Mouse-ear cress), this protein is S-protein homolog 3.